Consider the following 197-residue polypeptide: MRFALELLAIVVFFVVYKLDGIYSATAALIIMVLLNVFYHWFKHRHVPSMMWITLILVMLFGGATLIFHDPLFIKWKPSILQWVLASGFLASHLIGKRVLVARMLDNQISMPSLHWRRLNAAWVLFLLFSGALNLYVAYTFSEEIWVSFKLFGLMGLTILFLIGQAFYMSRHGSEVRVEERKEGMIEAEETVENRPE.

5 helical membrane-spanning segments follow: residues 22–42 (IYSATAALIIMVLLNVFYHWF), 48–68 (PSMMWITLILVMLFGGATLIF), 76–96 (WKPSILQWVLASGFLASHLIG), 121–141 (AAWVLFLLFSGALNLYVAYTF), and 144–164 (EIWVSFKLFGLMGLTILFLIG).

This sequence belongs to the YciB family.

The protein resides in the cell inner membrane. Plays a role in cell envelope biogenesis, maintenance of cell envelope integrity and membrane homeostasis. This chain is Inner membrane-spanning protein YciB, found in Magnetococcus marinus (strain ATCC BAA-1437 / JCM 17883 / MC-1).